The sequence spans 1495 residues: VPS10 homolog 2 (1495 aa).

The signal sequence occupies residues 1-21 (MALFRALYIIWVFLLIPLFNA). Topologically, residues 23–1369 (EFTPKVTRTL…AFREKYPINT (1347 aa)) are lumenal. BNR repeat units lie at residues 58–67 (ISFDAGENWK) and 101–111 (YVTDDQGKSWR). Asparagine 148 carries an N-linked (GlcNAc...) asparagine glycan. BNR repeat units follow at residues 229-238 (LSADGGETFK), 394-403 (VSVDNGLTWS), and 465-475 (FISRDSGLTWR). The N-linked (GlcNAc...) asparagine glycan is linked to asparagine 479. BNR repeat units lie at residues 511–520 (YYSLDQGKTW) and 740–750 (YISHDGGQTIK). Asparagine 769 carries an N-linked (GlcNAc...) asparagine glycan. The BNR 8 repeat unit spans residues 837–847 (YLTKDGGETFT). The N-linked (GlcNAc...) asparagine glycan is linked to asparagine 986. BNR repeat units follow at residues 1119–1129 (FLTTDGGETWT) and 1161–1170 (YSTDFGKTWK). The N-linked (GlcNAc...) asparagine glycan is linked to asparagine 1279. Residues 1370–1390 (GAYALVFVTILLVIFFAAWFV) form a helical membrane-spanning segment. Over 1391–1495 (YDRGIRRNGG…GTAQLSCFKI (105 aa)) the chain is Cytoplasmic.

Belongs to the VPS10-related sortilin family.

The protein localises to the golgi apparatus. It is found in the trans-Golgi network membrane. Functions as a sorting receptor in the Golgi compartment required for the intracellular sorting and delivery of soluble vacuolar proteins, like carboxypeptidase Y (CPY) and proteinase A. In Saccharomyces cerevisiae (strain Lalvin EC1118 / Prise de mousse) (Baker's yeast), this protein is VPS10 homolog 2 (VTH2).